A 1259-amino-acid polypeptide reads, in one-letter code: Telomerase reverse transcriptase (1259 aa).

A Reverse transcriptase domain is found at 742–1067; sequence RGEPRKAVRH…SFMPWSGLLI (326 aa). Residues Asp-837, Asp-999, and Asp-1000 each contribute to the Mg(2+) site.

Belongs to the reverse transcriptase family. Telomerase subfamily. In terms of assembly, component of the telomerase ribonucleoprotein complex. In terms of tissue distribution, expressed in shoot apices and immature embryos.

The protein resides in the nucleus. It localises to the chromosome. Its subcellular location is the telomere. It carries out the reaction DNA(n) + a 2'-deoxyribonucleoside 5'-triphosphate = DNA(n+1) + diphosphate. Its function is as follows. Telomerase is a ribonucleoprotein enzyme essential for the replication of chromosome termini in most eukaryotes. It elongates telomeres. It is a reverse transcriptase that adds simple sequence repeats to chromosome ends by copying a template sequence within the RNA component of the enzyme. This Oryza sativa subsp. japonica (Rice) protein is Telomerase reverse transcriptase (TERT).